Consider the following 371-residue polypeptide: Cytochrome b (371 aa).

The next 4 membrane-spanning stretches (helical) occupy residues 25 to 45 (FGSMLLSCLFLQTTTGFFLAI), 69 to 90 (WIMQNTHAISASAFFICIYIHI), 105 to 125 (WLTGVALLTTLMATAFFGYVL), and 170 to 190 (FFALHFILPFLIISLSSIHII). 2 residues coordinate heme b: histidine 75 and histidine 89. Positions 174 and 188 each coordinate heme b. Position 193 (histidine 193) interacts with a ubiquinone. Helical transmembrane passes span 218–238 (YKDLLMFITLMTMLLLTLSFM), 280–300 (LGGALALTMSIIILTTAPFTH), 312–332 (LAQTLFWTLIATFITITWAAT), and 339–358 (FLLISQTTAILYFSFFIMNP).

This sequence belongs to the cytochrome b family. In terms of assembly, the cytochrome bc1 complex contains 3 respiratory subunits (MT-CYB, CYC1 and UQCRFS1), 2 core proteins (UQCRC1 and UQCRC2) and probably 6 low-molecular weight proteins. The cofactor is heme b.

The protein resides in the mitochondrion inner membrane. Component of the ubiquinol-cytochrome c reductase complex (complex III or cytochrome b-c1 complex) that is part of the mitochondrial respiratory chain. The b-c1 complex mediates electron transfer from ubiquinol to cytochrome c. Contributes to the generation of a proton gradient across the mitochondrial membrane that is then used for ATP synthesis. The sequence is that of Cytochrome b (MT-CYB) from Laticauda colubrina (Yellow-lipped sea krait).